The chain runs to 1060 residues: Outer capsid protein VP2 (1060 aa).

It belongs to the orbivirus VP2 family.

The protein resides in the virion. Functionally, the VP2 protein is one of the two proteins (with VP5) which constitute the virus particle outer capsid. It is the major target of the host immunogenic response. The protein is Outer capsid protein VP2 (Segment-2) of Camelus dromedarius (Dromedary).